Reading from the N-terminus, the 154-residue chain is Low molecular weight protein-tyrosine-phosphatase PtpA (154 aa).

The Nucleophile role is filled by C8. R14 is a catalytic residue. The active-site Proton donor is D120.

The protein belongs to the low molecular weight phosphotyrosine protein phosphatase family.

The enzyme catalyses O-phospho-L-tyrosyl-[protein] + H2O = L-tyrosyl-[protein] + phosphate. In terms of biological role, dephosphorylates the phosphotyrosine-containing proteins. This chain is Low molecular weight protein-tyrosine-phosphatase PtpA (ptpA), found in Staphylococcus saprophyticus subsp. saprophyticus (strain ATCC 15305 / DSM 20229 / NCIMB 8711 / NCTC 7292 / S-41).